Consider the following 179-residue polypeptide: Transcription factor 21 (179 aa).

A disordered region spans residues 19 to 88 (DCDSLKVDSN…VQRNAANARE (70 aa)). 2 stretches are compositionally biased toward polar residues: residues 30-49 (EFGT…NGSP) and 70-80 (SGVSQEGKQVQ). In terms of domain architecture, bHLH spans 79–131 (VQRNAANARERARMRVLSKAFSRLKTTLPWVPPDTKLSKLDTLRLASSYIAHL).

In terms of assembly, efficient DNA binding requires dimerization with another bHLH protein. Forms a heterodimer with TCF3 and binds the E box (5'-CANNTG-3'). As to expression, expressed at high levels in lung, kidney, gut, heart, ovary and podocytes (visceral glomerular epithelial cells). Also found in spleen, large intestine, uterus, bladder and testis.

It is found in the nucleus. Functionally, involved in epithelial-mesenchymal interactions in kidney and lung morphogenesis that include epithelial differentiation and branching morphogenesis. May be involved in the organogenesis of the spleen and heart and in cardiac and coronary artery development. May function in the development and sex differentiation of gonad via transcriptional regulation of AD4BP/SF-1. This chain is Transcription factor 21 (Tcf21), found in Mus musculus (Mouse).